The following is a 240-amino-acid chain: Probable transcriptional regulatory protein SO_3401 (240 aa).

Belongs to the TACO1 family.

The protein resides in the cytoplasm. This is Probable transcriptional regulatory protein SO_3401 from Shewanella oneidensis (strain ATCC 700550 / JCM 31522 / CIP 106686 / LMG 19005 / NCIMB 14063 / MR-1).